Reading from the N-terminus, the 507-residue chain is MSESKRIKTALVSVYHKEGLDEIITKLYEEGVEFLSTGGTRQFIESLGYPCKAVEDLTTYPSILGGRVKTLHPKIFGGILCRRDLEQDIQQIEKYEIPEIDLVIVDLYPFEATVASGASEADIIEKIDIGGISLIRAAAKNYNDVIIVASQAQYKPLLDMLMEHGATSSLEERRWMAKEAFAVSSHYDSAIFNYFDAGEGSAFRCSVNNQKQLRYGENPHQKGYFYGNLDAMFDQIHGKEISYNNLLDINAAVDLIDEYEDLTFAILKHNNACGLASRPTVLEAWTDALAGDPVSAFGGVLITNGVIDKAAAEEINKIFFEVIIAPDYDVDALEILGQKKNRIILVRKEAKLPKKQFRALLNGVLVQDKDMNIETVADLRTVTDKAPTPEEVEDLLFANKIVKNSKSNAIVLAKGKQLLASGVGQTSRVDALKQAIEKAKSFGFDLNGAVMASDAFFPFPDCVEIADKEGITAVIQPGGSVKDDLTFAYCNEHGMAMVTTGIRHFKH.

Residues methionine 1–alanine 149 enclose the MGS-like domain.

It belongs to the PurH family.

The enzyme catalyses (6R)-10-formyltetrahydrofolate + 5-amino-1-(5-phospho-beta-D-ribosyl)imidazole-4-carboxamide = 5-formamido-1-(5-phospho-D-ribosyl)imidazole-4-carboxamide + (6S)-5,6,7,8-tetrahydrofolate. It catalyses the reaction IMP + H2O = 5-formamido-1-(5-phospho-D-ribosyl)imidazole-4-carboxamide. It functions in the pathway purine metabolism; IMP biosynthesis via de novo pathway; 5-formamido-1-(5-phospho-D-ribosyl)imidazole-4-carboxamide from 5-amino-1-(5-phospho-D-ribosyl)imidazole-4-carboxamide (10-formyl THF route): step 1/1. Its pathway is purine metabolism; IMP biosynthesis via de novo pathway; IMP from 5-formamido-1-(5-phospho-D-ribosyl)imidazole-4-carboxamide: step 1/1. The polypeptide is Bifunctional purine biosynthesis protein PurH (Bacteroides thetaiotaomicron (strain ATCC 29148 / DSM 2079 / JCM 5827 / CCUG 10774 / NCTC 10582 / VPI-5482 / E50)).